Here is a 424-residue protein sequence, read N- to C-terminus: MHDLRALRADPAAFDAALARRGEAPAAIHIASLDEDRRAAVTALQDKQARRKSLSKEVGALRRTGEDSTALEAEAVQLREDIEKLEVLVRELDAEIRDCLVVLPNRLDDGVPEGADESANVVVHQVGERRDFAFPPREHFALGEALGLMDFETAGKLSGARFVVLRGALARMERALGQFMLDLHVQEHGYTETAVPVLVNEAAMFGTDKLPKFADQSFRTEDGRWLIPTAEVPLTASVAGDILPASALPRRMVALSSCFRSEAGAAGRDTRGMLRQHQFQKVEMVSITAPGDSDAEHERMTRCAEKVLERLGIPYRRMLLCAGDTGFGAARTFDLEAWLPGQDAWREISSCSTTRDFQARRMNARYRPADGAGPEFVHTLNGSGLAVGRTLIAVMENYQNADGSITVPQALRPYMNGLAAISAR.

229 to 231 (TAE) serves as a coordination point for L-serine. 260 to 262 (RSE) is an ATP binding site. Position 283 (Glu-283) interacts with L-serine. 347–350 (EISS) serves as a coordination point for ATP. Residue Ser-383 coordinates L-serine.

This sequence belongs to the class-II aminoacyl-tRNA synthetase family. Type-1 seryl-tRNA synthetase subfamily. As to quaternary structure, homodimer. The tRNA molecule binds across the dimer.

The protein localises to the cytoplasm. The enzyme catalyses tRNA(Ser) + L-serine + ATP = L-seryl-tRNA(Ser) + AMP + diphosphate + H(+). The catalysed reaction is tRNA(Sec) + L-serine + ATP = L-seryl-tRNA(Sec) + AMP + diphosphate + H(+). The protein operates within aminoacyl-tRNA biosynthesis; selenocysteinyl-tRNA(Sec) biosynthesis; L-seryl-tRNA(Sec) from L-serine and tRNA(Sec): step 1/1. Functionally, catalyzes the attachment of serine to tRNA(Ser). Is also able to aminoacylate tRNA(Sec) with serine, to form the misacylated tRNA L-seryl-tRNA(Sec), which will be further converted into selenocysteinyl-tRNA(Sec). In Gluconacetobacter diazotrophicus (strain ATCC 49037 / DSM 5601 / CCUG 37298 / CIP 103539 / LMG 7603 / PAl5), this protein is Serine--tRNA ligase.